Reading from the N-terminus, the 402-residue chain is MSPCGPLNLSLAGEATTCAAPWVPNTSAVPPSGASPALPIFSMTLGAVSNLLALALLAQAAGRLRRRRSAATFLLFVASLLATDLAGHVIPGALVLRLYTAGRAPAGGACHFLGGCMVFFGLCPLLLGCGMAVERCVGVTRPLLHAARVSVARARLALAAVAAVALAVALLPLARVGRYELQYPGTWCFIGLGPPGGWRQALLAGLFASLGLVALLAALVCNTLSGLALLRARWRRRSRRPPPASGPDSRRRWGAHGPRSASASSASSIASASTFFGGSRSSGSARRARAHDVEMVGQLVGIMVVSCICWSPMLVLVALAVGGWSSTSLQRPLFLAVRLASWNQILDPWVYILLRQAVLRQLLRLLPPRAGAKGGPAGLGLTPSAWEASSLRSSRHSGLSHF.

The Extracellular segment spans residues 1–35 (MSPCGPLNLSLAGEATTCAAPWVPNTSAVPPSGAS). N-linked (GlcNAc...) asparagine glycans are attached at residues N8 and N25. Residues 36–62 (PALPIFSMTLGAVSNLLALALLAQAAG) traverse the membrane as a helical segment. Topologically, residues 63–72 (RLRRRRSAAT) are cytoplasmic. Residues 73-96 (FLLFVASLLATDLAGHVIPGALVL) traverse the membrane as a helical segment. Over 97-111 (RLYTAGRAPAGGACH) the chain is Extracellular. A disulfide bridge connects residues C110 and C188. A helical transmembrane segment spans residues 112 to 133 (FLGGCMVFFGLCPLLLGCGMAV). Over 134-155 (ERCVGVTRPLLHAARVSVARAR) the chain is Cytoplasmic. The chain crosses the membrane as a helical span at residues 156–177 (LALAAVAAVALAVALLPLARVG). Residues 178–201 (RYELQYPGTWCFIGLGPPGGWRQA) lie on the Extracellular side of the membrane. A helical membrane pass occupies residues 202-227 (LLAGLFASLGLVALLAALVCNTLSGL). Residues 228-294 (ALLRARWRRR…ARRARAHDVE (67 aa)) lie on the Cytoplasmic side of the membrane. Residues 238-266 (SRRPPPASGPDSRRRWGAHGPRSASASSA) form a disordered region. The helical transmembrane segment at 295–321 (MVGQLVGIMVVSCICWSPMLVLVALAV) threads the bilayer. The Extracellular segment spans residues 322 to 332 (GGWSSTSLQRP). The chain crosses the membrane as a helical span at residues 333–354 (LFLAVRLASWNQILDPWVYILL). Residues 355-402 (RQAVLRQLLRLLPPRAGAKGGPAGLGLTPSAWEASSLRSSRHSGLSHF) are Cytoplasmic-facing.

It belongs to the G-protein coupled receptor 1 family. In terms of processing, phosphorylated. As to expression, abundant in kidney. Lower level expression in lung, skeletal muscle and spleen, lowest expression in testis and not detected in liver brain and heart.

The protein localises to the cell membrane. Its function is as follows. Receptor for prostaglandin E2 (PGE2). The activity of this receptor is mediated by G(q) proteins which activate a phosphatidylinositol-calcium second messenger system. May play a role as an important modulator of renal function. Implicated the smooth muscle contractile response to PGE2 in various tissues. In Homo sapiens (Human), this protein is Prostaglandin E2 receptor EP1 subtype (PTGER1).